Here is a 203-residue protein sequence, read N- to C-terminus: Peptidoglycan-recognition protein SA (203 aa).

The N-terminal stretch at 1-26 (MQPVRFGSPWIMAIGLVLLLLAFVSA) is a signal peptide. Disulfide bonds link C37–C160 and C74–C80. The N-acetylmuramoyl-L-alanine amidase domain maps to 59–186 (RPIRYVVIHH…SQVISTQSPG (128 aa)). 2 peptidoglycan binding regions span residues 87–90 (MQAY) and 97–102 (FNDISY).

This sequence belongs to the N-acetylmuramoyl-L-alanine amidase 2 family. In larvae, it is expressed in fat body. Also expressed in uninduced hemocytes and mbn-2 cells.

The protein resides in the secreted. The enzyme catalyses N-acetyl-D-glucosaminyl-N-acetylmuramoyl-L-alanyl-meso-2,6-diaminoheptanedioyl-D-alanine + H2O = N-acetyl-D-glucosaminyl-N-acetylmuramoyl-L-alanyl-meso-2,6-diaminoheptanedioate + D-alanine. Functionally, peptidoglycan-recognition protein that plays a key role in innate immunity by binding to peptidoglycans (PGN) of Gram-positive bacteria and activating the Toll pathway upstream of spz activating enzyme SPE. Has no activity against Gram-negative bacteria and fungi. Shows some partial redundancy with PRPGP-SD in Gram-positive bacteria recognition. May act by forming a complex with GNBP1 that activates the proteolytic cleavage of Spatzle and the subsequent activation of Toll pathway. Binds to diaminopimelic acid-type tetrapeptide PGN (DAP-type PGN) and lysine-type PGN (Lys-type PGN). Has some L,D-carboxypeptidase activity for DAP-type PGN, which are specific to prokaryotes, but not for Lys-type PGN. This Drosophila melanogaster (Fruit fly) protein is Peptidoglycan-recognition protein SA (PGRP-SA).